The primary structure comprises 118 residues: M-zodatoxin-Lt8p (118 aa).

The N-terminal stretch at 1 to 3 (AES) is a signal peptide. Residues 4–43 (KPAESEHELAEVEEENELADLEDAVWLEHLADLSDLEEAR) constitute a propeptide that is removed on maturation.

This sequence belongs to the cationic peptide 06 (cytoinsectotoxin) family. In terms of tissue distribution, expressed by the venom gland.

The protein localises to the secreted. Functionally, insecticidal, cytolytic and antimicrobial peptide. Forms voltage-dependent, ion-permeable channels in membranes. At high concentration causes cell membrane lysis. The chain is M-zodatoxin-Lt8p (cit 1-15) from Lachesana tarabaevi (Spider).